Consider the following 360-residue polypeptide: D-alanine--D-alanine ligase (360 aa).

The 207-residue stretch at 146–352 (KICAEHAGLH…FSQLIDRLLQ (207 aa)) folds into the ATP-grasp domain. Residue 179–234 (LEEFTLPFFVKPASQGSSIGITKVHRPEELAAALEKAFMVDTKVLIEKTIEGREIE) coordinates ATP. Positions 305, 319, and 321 each coordinate Mg(2+).

The protein belongs to the D-alanine--D-alanine ligase family. Mg(2+) is required as a cofactor. The cofactor is Mn(2+).

Its subcellular location is the cytoplasm. The catalysed reaction is 2 D-alanine + ATP = D-alanyl-D-alanine + ADP + phosphate + H(+). The protein operates within cell wall biogenesis; peptidoglycan biosynthesis. In terms of biological role, cell wall formation. The sequence is that of D-alanine--D-alanine ligase from Prosthecochloris aestuarii (strain DSM 271 / SK 413).